Reading from the N-terminus, the 158-residue chain is NADH-quinone oxidoreductase subunit B 1 (158 aa).

Residues C37, C38, C102, and C132 each contribute to the [4Fe-4S] cluster site.

Belongs to the complex I 20 kDa subunit family. NDH-1 is composed of 14 different subunits. Subunits NuoB, C, D, E, F, and G constitute the peripheral sector of the complex. It depends on [4Fe-4S] cluster as a cofactor.

The protein localises to the cell inner membrane. It carries out the reaction a quinone + NADH + 5 H(+)(in) = a quinol + NAD(+) + 4 H(+)(out). Functionally, NDH-1 shuttles electrons from NADH, via FMN and iron-sulfur (Fe-S) centers, to quinones in the respiratory chain. Couples the redox reaction to proton translocation (for every two electrons transferred, four hydrogen ions are translocated across the cytoplasmic membrane), and thus conserves the redox energy in a proton gradient. The protein is NADH-quinone oxidoreductase subunit B 1 of Azoarcus sp. (strain BH72).